We begin with the raw amino-acid sequence, 39 residues long: Photosystem II reaction center protein L (39 aa).

The chain crosses the membrane as a helical span at residues Ser18–Phe38.

This sequence belongs to the PsbL family. As to quaternary structure, PSII is composed of 1 copy each of membrane proteins PsbA, PsbB, PsbC, PsbD, PsbE, PsbF, PsbH, PsbI, PsbJ, PsbK, PsbL, PsbM, PsbT, PsbX, PsbY, Psb30/Ycf12, peripheral proteins PsbO, CyanoQ (PsbQ), PsbU, PsbV and a large number of cofactors. It forms dimeric complexes.

The protein localises to the cellular thylakoid membrane. Its function is as follows. One of the components of the core complex of photosystem II (PSII). PSII is a light-driven water:plastoquinone oxidoreductase that uses light energy to abstract electrons from H(2)O, generating O(2) and a proton gradient subsequently used for ATP formation. It consists of a core antenna complex that captures photons, and an electron transfer chain that converts photonic excitation into a charge separation. This subunit is found at the monomer-monomer interface and is required for correct PSII assembly and/or dimerization. This Prochlorococcus marinus (strain MIT 9313) protein is Photosystem II reaction center protein L.